The chain runs to 252 residues: Mitochondrial intermembrane space import and assembly protein 40 (252 aa).

A mitochondrion-targeting transit peptide spans 1–31; the sequence is MYRTISRSSSGLIRQSTARLTRQLSTTRTTP. Residues 32–37 lie on the Mitochondrial matrix side of the membrane; it reads SQYNSK. Residues 38 to 54 form a helical; Signal-anchor for type II membrane protein membrane-spanning segment; sequence LLLGVLGTGALAFGYFS. The Mitochondrial intermembrane segment spans residues 55–252; sequence QQSSLIQNAS…DKVKPNTKSD (198 aa). Over residues 90–123 the composition is skewed to basic and acidic residues; the sequence is RQEKVIKENEQKTKKAEDAKTSSESKANVADKKS. A disordered region spans residues 90–143; that stretch reads RQEKVIKENEQKTKKAEDAKTSSESKANVADKKSNSQPEGEPEGEGKQEAAFNP. Intrachain disulfides connect cysteine 152-cysteine 154, cysteine 163-cysteine 196, and cysteine 173-cysteine 186. The 45-residue stretch at 160–204 folds into the CHCH domain; the sequence is HGPCGEEFKEAFSCFVFSETEPKGIDCIKKFENMRSCFKRYPEHY. 2 consecutive short sequence motifs (cx9C motif) follow at residues 163-173 and 186-196; these read CGEEFKEAFSC and CIKKFENMRSC. Residues 230–252 form a disordered region; sequence EPAIEQIEQGIKEDKVKPNTKSD. The span at 239 to 252 shows a compositional bias: basic and acidic residues; the sequence is GIKEDKVKPNTKSD.

In terms of assembly, monomer. It depends on Cu(2+) as a cofactor. Requires Zn(2+) as cofactor.

It is found in the mitochondrion inner membrane. Its function is as follows. Required for the import and folding of small cysteine-containing proteins (small Tim) in the mitochondrial intermembrane space (IMS). Forms a redox cycle with ERV1 that involves a disulfide relay system. Precursor proteins to be imported into the IMS are translocated in their reduced form into the mitochondria. The oxidized form of MIA40 forms a transient intermolecular disulfide bridge with the reduced precursor protein, resulting in oxidation of the precursor protein that now contains an intramolecular disulfide bond and is able to undergo folding in the IMS. The chain is Mitochondrial intermembrane space import and assembly protein 40 (MIA40) from Candida albicans (strain SC5314 / ATCC MYA-2876) (Yeast).